A 458-amino-acid chain; its full sequence is UDP-N-acetylmuramoylalanine--D-glutamate ligase (458 aa).

ATP is bound at residue 124 to 130; it reads GSDGKTT.

The protein belongs to the MurCDEF family.

The protein resides in the cytoplasm. The enzyme catalyses UDP-N-acetyl-alpha-D-muramoyl-L-alanine + D-glutamate + ATP = UDP-N-acetyl-alpha-D-muramoyl-L-alanyl-D-glutamate + ADP + phosphate + H(+). Its pathway is cell wall biogenesis; peptidoglycan biosynthesis. Its function is as follows. Cell wall formation. Catalyzes the addition of glutamate to the nucleotide precursor UDP-N-acetylmuramoyl-L-alanine (UMA). This chain is UDP-N-acetylmuramoylalanine--D-glutamate ligase, found in Clostridium botulinum (strain Alaska E43 / Type E3).